A 308-amino-acid polypeptide reads, in one-letter code: Transaldolase (308 aa).

Lys125 functions as the Schiff-base intermediate with substrate in the catalytic mechanism.

The protein belongs to the transaldolase family. Type 1 subfamily. As to quaternary structure, homodimer.

It is found in the cytoplasm. It carries out the reaction D-sedoheptulose 7-phosphate + D-glyceraldehyde 3-phosphate = D-erythrose 4-phosphate + beta-D-fructose 6-phosphate. It participates in carbohydrate degradation; pentose phosphate pathway; D-glyceraldehyde 3-phosphate and beta-D-fructose 6-phosphate from D-ribose 5-phosphate and D-xylulose 5-phosphate (non-oxidative stage): step 2/3. Its function is as follows. Transaldolase is important for the balance of metabolites in the pentose-phosphate pathway. The sequence is that of Transaldolase from Ectopseudomonas mendocina (strain ymp) (Pseudomonas mendocina).